The chain runs to 336 residues: Probable ADP-ribosylation factor GTPase-activating protein AGD13 (336 aa).

The Arf-GAP domain maps to 15–137 (KRRIRDLLNQ…EFLKPSLRIT (123 aa)). The segment at 30–53 (CADCGASDPKWASANIGVFICLKC) adopts a C4-type zinc-finger fold. The C2 domain maps to 162 to 280 (RTNSSSQTMF…AMAFGDPEMF (119 aa)). Positions 249, 252, and 255 each coordinate Ca(2+).

The cofactor is Ca(2+).

Its function is as follows. GTPase-activating protein (GAP) for ADP ribosylation factor (ARF). This Arabidopsis thaliana (Mouse-ear cress) protein is Probable ADP-ribosylation factor GTPase-activating protein AGD13 (AGD13).